The following is a 307-amino-acid chain: Aspartate carbamoyltransferase catalytic subunit (307 aa).

Positions 59 and 60 each coordinate carbamoyl phosphate. Lysine 87 contributes to the L-aspartate binding site. Residues arginine 109, histidine 137, and glutamine 140 each coordinate carbamoyl phosphate. L-aspartate-binding residues include arginine 173 and arginine 223. Carbamoyl phosphate-binding residues include glycine 266 and proline 267.

Belongs to the aspartate/ornithine carbamoyltransferase superfamily. ATCase family. Heterododecamer (2C3:3R2) of six catalytic PyrB chains organized as two trimers (C3), and six regulatory PyrI chains organized as three dimers (R2).

The catalysed reaction is carbamoyl phosphate + L-aspartate = N-carbamoyl-L-aspartate + phosphate + H(+). It participates in pyrimidine metabolism; UMP biosynthesis via de novo pathway; (S)-dihydroorotate from bicarbonate: step 2/3. In terms of biological role, catalyzes the condensation of carbamoyl phosphate and aspartate to form carbamoyl aspartate and inorganic phosphate, the committed step in the de novo pyrimidine nucleotide biosynthesis pathway. This Helicobacter pylori (strain ATCC 700392 / 26695) (Campylobacter pylori) protein is Aspartate carbamoyltransferase catalytic subunit.